The chain runs to 347 residues: WAT1-related protein At4g15540 (347 aa).

10 consecutive transmembrane segments (helical) span residues 15–35, 47–67, 73–93, 108–128, 139–159, 178–198, 210–230, 243–263, 276–296, and 299–319; these read VVPFTAMIAIECTTVGSSILY, VFVFYAYVGATLVLLLLSLIF, LPTAKSSLFFKIFLLALLGLT, TLSSAISNLTPAFTFILAIFF, ATQAKIIGTIVSISGALVIVL, WIIGGLLLGLQFLLLSVWFIL, IAVVFCYNLCATLISGTVCLL, GFSLASVIYSGLFDTSLGSVI, ISLFKPLSIAIAVAMAAIFLG, and LHLGSVIGSVILSFGFYTVIW. The EamA 1 domain maps to 30–158; it reads GSSILYKAAT…VSISGALVIV (129 aa). Residues 216–317 form the EamA 2 domain; that stretch reads YNLCATLISG…VILSFGFYTV (102 aa).

This sequence belongs to the drug/metabolite transporter (DMT) superfamily. Plant drug/metabolite exporter (P-DME) (TC 2.A.7.4) family.

Its subcellular location is the membrane. This is WAT1-related protein At4g15540 from Arabidopsis thaliana (Mouse-ear cress).